Consider the following 388-residue polypeptide: F-box protein ETP2 (388 aa).

The F-box domain maps to 2–48 (KTIQEQLPNDLVEEILCRVPATSLRRLRSTCKAWNRLFKGDRILASK).

In terms of assembly, interacts with EIN2 (via C-terminus).

Functionally, negative regulator of EIN2 protein stability. The polypeptide is F-box protein ETP2 (Arabidopsis thaliana (Mouse-ear cress)).